A 383-amino-acid polypeptide reads, in one-letter code: Transcription termination factor Rho (383 aa).

The tract at residues 1–22 is disordered; sequence MTIETTTKKRPRAARPPRPRES. The segment covering 8-17 has biased composition (basic residues); sequence KKRPRAARPP. One can recognise a Rho RNA-BD domain in the interval 26 to 93; the sequence is LETVAGLLDV…AEVESVNGST (68 aa). ATP is bound by residues 132-137, 144-149, and Arg175; these read GKGQRG and KAGKTM.

It belongs to the Rho family. As to quaternary structure, homohexamer. The homohexamer assembles into an open ring structure.

In terms of biological role, facilitates transcription termination by a mechanism that involves Rho binding to the nascent RNA, activation of Rho's RNA-dependent ATPase activity, and release of the mRNA from the DNA template. This chain is Transcription termination factor Rho, found in Streptosporangium roseum (strain ATCC 12428 / DSM 43021 / JCM 3005 / KCTC 9067 / NCIMB 10171 / NRRL 2505 / NI 9100).